We begin with the raw amino-acid sequence, 188 residues long: Adenine phosphoribosyltransferase (188 aa).

This sequence belongs to the purine/pyrimidine phosphoribosyltransferase family. As to quaternary structure, homodimer.

It is found in the cytoplasm. The catalysed reaction is AMP + diphosphate = 5-phospho-alpha-D-ribose 1-diphosphate + adenine. Its pathway is purine metabolism; AMP biosynthesis via salvage pathway; AMP from adenine: step 1/1. Catalyzes a salvage reaction resulting in the formation of AMP, that is energically less costly than de novo synthesis. This Paraburkholderia xenovorans (strain LB400) protein is Adenine phosphoribosyltransferase.